A 211-amino-acid chain; its full sequence is SsrA-binding protein (211 aa).

Residues 168-211 form a disordered region; the sequence is KHRLRRPRAQRNTQRSVTPRRTRENKNVRGSKARSARRNVRREN. A compositionally biased stretch (polar residues) spans 177-186; sequence QRNTQRSVTP. Residues 196–211 are compositionally biased toward basic residues; sequence RGSKARSARRNVRREN.

Belongs to the SmpB family.

Its subcellular location is the cytoplasm. Required for rescue of stalled ribosomes mediated by trans-translation. Binds to transfer-messenger RNA (tmRNA), required for stable association of tmRNA with ribosomes. tmRNA and SmpB together mimic tRNA shape, replacing the anticodon stem-loop with SmpB. tmRNA is encoded by the ssrA gene; the 2 termini fold to resemble tRNA(Ala) and it encodes a 'tag peptide', a short internal open reading frame. During trans-translation Ala-aminoacylated tmRNA acts like a tRNA, entering the A-site of stalled ribosomes, displacing the stalled mRNA. The ribosome then switches to translate the ORF on the tmRNA; the nascent peptide is terminated with the 'tag peptide' encoded by the tmRNA and targeted for degradation. The ribosome is freed to recommence translation, which seems to be the essential function of trans-translation. This is SsrA-binding protein from Tropheryma whipplei (strain Twist) (Whipple's bacillus).